A 308-amino-acid chain; its full sequence is Protoheme IX farnesyltransferase (308 aa).

A run of 8 helical transmembrane segments spans residues 31–51, 53–73, 102–122, 124–144, 149–169, 170–190, 240–260, and 288–308; these read VIEL…RGTV, PLLI…ANAL, NALV…WWTT, LLSG…YTLL, TSQN…IGWS, AVTG…FFWT, LALA…VWFL, and YLAV…PHLF.

Belongs to the UbiA prenyltransferase family. Protoheme IX farnesyltransferase subfamily.

Its subcellular location is the cell membrane. The catalysed reaction is heme b + (2E,6E)-farnesyl diphosphate + H2O = Fe(II)-heme o + diphosphate. The protein operates within porphyrin-containing compound metabolism; heme O biosynthesis; heme O from protoheme: step 1/1. Its function is as follows. Converts heme B (protoheme IX) to heme O by substitution of the vinyl group on carbon 2 of heme B porphyrin ring with a hydroxyethyl farnesyl side group. In Mycobacterium avium (strain 104), this protein is Protoheme IX farnesyltransferase.